We begin with the raw amino-acid sequence, 431 residues long: Glutamyl-tRNA(Gln) amidotransferase subunit A (431 aa).

Residues K37 and S112 each act as charge relay system in the active site. S136 acts as the Acyl-ester intermediate in catalysis.

This sequence belongs to the amidase family. GatA subfamily. Heterotrimer of A, B and C subunits.

It carries out the reaction L-glutamyl-tRNA(Gln) + L-glutamine + ATP + H2O = L-glutaminyl-tRNA(Gln) + L-glutamate + ADP + phosphate + H(+). Its function is as follows. Allows the formation of correctly charged Gln-tRNA(Gln) through the transamidation of misacylated Glu-tRNA(Gln) in organisms which lack glutaminyl-tRNA synthetase. The reaction takes place in the presence of glutamine and ATP through an activated gamma-phospho-Glu-tRNA(Gln). The polypeptide is Glutamyl-tRNA(Gln) amidotransferase subunit A (Methanospirillum hungatei JF-1 (strain ATCC 27890 / DSM 864 / NBRC 100397 / JF-1)).